The chain runs to 109 residues: MRILNMNEYIGLNHYLILSSLVFTIGMLGLFMHRKNIINILMSIELMLLAVNINFVAFSVYMQELSGQIFSIIILTIAAAETSIGLAILLIYFRNKGSIEVTDINQMRG.

Transmembrane regions (helical) follow at residues 12 to 32, 40 to 60, and 72 to 92; these read LNHY…GLFM, ILMS…AFSV, and IIIL…LLIY.

It belongs to the complex I subunit 4L family. In terms of assembly, NDH-1 is composed of 14 different subunits. Subunits NuoA, H, J, K, L, M, N constitute the membrane sector of the complex.

It is found in the cell inner membrane. It carries out the reaction a quinone + NADH + 5 H(+)(in) = a quinol + NAD(+) + 4 H(+)(out). Its function is as follows. NDH-1 shuttles electrons from NADH, via FMN and iron-sulfur (Fe-S) centers, to quinones in the respiratory chain. The immediate electron acceptor for the enzyme in this species is believed to be ubiquinone. Couples the redox reaction to proton translocation (for every two electrons transferred, four hydrogen ions are translocated across the cytoplasmic membrane), and thus conserves the redox energy in a proton gradient. In Rickettsia bellii (strain RML369-C), this protein is NADH-quinone oxidoreductase subunit K.